Reading from the N-terminus, the 575-residue chain is MVMEDNESCASRVIFDALPTSQATMDRRERIKMEVFDEVLRRLRQSDIEDAHLPGFEDDLWNHFNRLPARYALDVNVERAEDVLMHKRLLHSAYDPQNRPAIEVHLVQVQPAGISADLDSTSNDAGHSSPTRKSIHPPPAFGSSPNLEALALAASLSQDEDADNSVHNNSLYSRPLHEITFSTEDKPKLLFQLTALLAELGLNIQEAHAFSTTDGYSLDVFVVDGWPYEETERLRISLEKEAAKIELQSQSWPMQQSFSPEKENGQTGARTHVPIPNDGTDVWEINLKHLKFGHKIASGSYGDLYKGTYCSQEVAIKVLKPERLDSDLEKEFAQEVFIMRKVRHKNVVQFIGACTKPPHLCIVTEFMPGGSVYDYLHKQKGVFKLPTLFKVAIDICKGMSYLHQNNIIHRDLKAANLLMDENEVVKVADFGVARVKAQTGVMTAETGTYRWMAPEVIEHKPYDHKADVFSYGIVLWELLTGKLPYEYMTPLQAAVGVVQKGLRPTIPKNTHPKLAELLERLWEHDSTQRPDFSEIIEQLQEIAKEVGEEGEEKKKSSTGLGGGIFAALRRSTTHH.

The segment at 116-140 is disordered; that stretch reads ADLDSTSNDAGHSSPTRKSIHPPPA. A compositionally biased stretch (polar residues) spans 118–132; that stretch reads LDSTSNDAGHSSPTR. The ACT domain occupies 178 to 252; the sequence is EITFSTEDKP…AKIELQSQSW (75 aa). The region spanning 290 to 543 is the Protein kinase domain; it reads LKFGHKIASG…EIIEQLQEIA (254 aa). Residues 296 to 304 and K317 contribute to the ATP site; that span reads IASGSYGDL. The Proton acceptor role is filled by D411. At T443 the chain carries Phosphothreonine.

The protein belongs to the protein kinase superfamily. Ser/Thr protein kinase family. In terms of processing, autophosphorylated on serine and threonine residues. Autophosphorylated at Thr-443.

The protein localises to the cytoplasm. It localises to the cytosol. The catalysed reaction is L-seryl-[protein] + ATP = O-phospho-L-seryl-[protein] + ADP + H(+). It catalyses the reaction L-threonyl-[protein] + ATP = O-phospho-L-threonyl-[protein] + ADP + H(+). With respect to regulation, activated by autophosphorylation at Thr-443. Its function is as follows. Serine/threonine protein kinase that specifically phosphorylates chloroplast precursor proteins in the cytosol within the cleavable presequences (transit peptides). May be part of a cytosolic regulatory network involved in chloroplast protein import. Does not phosphorylate mitochondrion precursor proteins. Specific for ATP and does not utilize other NTPs. Plays a role in chloroplast biogenesis and differentiation in cotyledons, possibly through phosphorylation of chloroplast preproteins. The polypeptide is Serine/threonine-protein kinase STY46 (Arabidopsis thaliana (Mouse-ear cress)).